We begin with the raw amino-acid sequence, 109 residues long: Large ribosomal subunit protein uL24 (109 aa).

The protein belongs to the universal ribosomal protein uL24 family. As to quaternary structure, part of the 50S ribosomal subunit.

In terms of biological role, one of two assembly initiator proteins, it binds directly to the 5'-end of the 23S rRNA, where it nucleates assembly of the 50S subunit. Functionally, one of the proteins that surrounds the polypeptide exit tunnel on the outside of the subunit. In Syntrophobacter fumaroxidans (strain DSM 10017 / MPOB), this protein is Large ribosomal subunit protein uL24.